Consider the following 447-residue polypeptide: M-phase inducer phosphatase 3 (447 aa).

Ser-2 bears the N-acetylserine mark. Phosphoserine is present on residues Ser-20, Ser-38, Ser-56, Ser-60, and Ser-63. Thr-66 carries the phosphothreonine; by CDK1 modification. Residues 81–90 are compositionally biased toward polar residues; it reads MSASPLTTSA. Residues 81–109 are disordered; that stretch reads MSASPLTTSADLEDNGSLDSSGPLDRQLT. Ser-128 is subject to Phosphoserine. At Thr-129 the chain carries Phosphothreonine. Phosphoserine; by CDK1 is present on Ser-192. Residues Ser-213 and Ser-220 each carry the phosphoserine; by PLK3 modification. The Rhodanese domain maps to 294–401; sequence VIERFYIIDC…FFPEYMELCD (108 aa). The active site involves Cys-350. Position 445 is a phosphoserine (Ser-445).

Belongs to the MPI phosphatase family. In terms of assembly, interacts with MAPK14 and 14-3-3 proteins. When phosphorylated on Ser-128 and/or Thr-129, interacts with PLK1. Interacts with MARK3/C-TAK1. In terms of processing, phosphorylated by PLK4. Phosphorylated by PLK1, leading to activate the phosphatase activity. Phosphorylated by CHEK1 and MAPKAPK2. This phosphorylation creates a binding site for 14-3-3 protein and inhibits the phosphatase activity. Phosphorylation by PLK3 at Ser-213 promotes nuclear translocation. Ser-220 is a minor phosphorylation site. Phosphorylation by CDK1 occurs at G2 and G2-M transition and leads to increased activity. In terms of tissue distribution, spleen and thymus.

The protein resides in the nucleus. It carries out the reaction O-phospho-L-tyrosyl-[protein] + H2O = L-tyrosyl-[protein] + phosphate. Functionally, functions as a dosage-dependent inducer in mitotic control. Tyrosine protein phosphatase required for progression of the cell cycle. When phosphorylated, highly effective in activating G2 cells into prophase. Directly dephosphorylates CDK1 and activates its kinase activity. This Mus musculus (Mouse) protein is M-phase inducer phosphatase 3 (Cdc25c).